The primary structure comprises 137 residues: Transcription antitermination protein NusB (137 aa).

It belongs to the NusB family.

Functionally, involved in transcription antitermination. Required for transcription of ribosomal RNA (rRNA) genes. Binds specifically to the boxA antiterminator sequence of the ribosomal RNA (rrn) operons. The polypeptide is Transcription antitermination protein NusB (Proteus mirabilis (strain HI4320)).